The chain runs to 99 residues: Ubiquitin-related modifier 1 (99 aa).

Gly-99 is modified (1-thioglycine). Gly-99 is covalently cross-linked (Glycyl lysine isopeptide (Gly-Lys) (interchain with K-? in acceptor proteins)).

This sequence belongs to the URM1 family. As to quaternary structure, homodimer; homodimerization may provide an autoprotection to the highly active C-terminal residue before attacking its substrates. Interacts with NCS2 and NCS6. Forms a conjugate with the target protein AHP1. In terms of processing, C-terminal thiocarboxylation occurs in 2 steps, it is first acyl-adenylated (-COAMP) via the hesA/moeB/thiF part of UBA4, then thiocarboxylated (-COSH) via the rhodanese domain of UBA4.

It localises to the cytoplasm. The protein resides in the nucleus. Its pathway is tRNA modification; 5-methoxycarbonylmethyl-2-thiouridine-tRNA biosynthesis. Acts as a sulfur carrier required for 2-thiolation of mcm(5)S(2)U at tRNA wobble positions of cytosolic tRNA(Lys), tRNA(Glu) and tRNA(Gln). Serves as sulfur donor in tRNA 2-thiolation reaction by being thiocarboxylated (-COSH) at its C-terminus by the MOCS3 homolog UBA4. The sulfur is then transferred to tRNA to form 2-thiolation of mcm(5)S(2)U. Prior mcm(5) tRNA modification by the elongator complex is required for 2-thiolation. Also acts as a ubiquitin-like protein (UBL) that is covalently conjugated via an isopeptide bond to lysine residues of target proteins such as AHP1. The thiocarboxylated form serves as substrate for conjugation and oxidative stress specifically induces the formation of UBL-protein conjugates. This is Ubiquitin-related modifier 1 from Saccharomyces cerevisiae (strain RM11-1a) (Baker's yeast).